The following is a 164-amino-acid chain: V-type proton ATPase subunit c' (164 aa).

Over 1–15 (MTDDLVNEYAPAFAP) the chain is Lumenal. Residues 16 to 36 (FFGFAGCAAAMILSSLGAAIG) traverse the membrane as a helical segment. Over 37 to 58 (TAKSGIGISGIGTFRPELIMKS) the chain is Cytoplasmic. Residues 59–79 (LIPVVMSGILAVYGLVVAVLV) form a helical membrane-spanning segment. Over 80–97 (AGGLSPTEEYTLFNGFMH) the chain is Lumenal. Residues 98-118 (LAAGLCVGFACLSSGYAIGIV) traverse the membrane as a helical segment. At 119–135 (GDVGVRKFMHQPRLFVG) the chain is on the cytoplasmic side. The chain crosses the membrane as a helical span at residues 136 to 156 (IVLILIFAEVLGLYGMIIALI). The Lumenal segment spans residues 157-164 (LNTRGSGN).

Belongs to the V-ATPase proteolipid subunit family. In terms of assembly, V-ATPase is a heteromultimeric enzyme composed of a peripheral catalytic V1 complex (components A to H) attached to an integral membrane V0 proton pore complex (components: a, c, c', c'', d, e, f and VOA1). The decameric c-ring forms the proton-conducting pore, and is composed of eight proteolipid subunits c, one subunit c' and one subunit c''.

It localises to the vacuole membrane. In terms of biological role, proton-conducting pore forming subunit of the V0 complex of vacuolar(H+)-ATPase (V-ATPase), a multisubunit enzyme composed of a peripheral complex (V1) that hydrolyzes ATP and a membrane integral complex (V0) that translocates protons. V-ATPase is responsible for acidifying and maintaining the pH of intracellular compartments. The polypeptide is V-type proton ATPase subunit c' (VMA11) (Eremothecium gossypii (strain ATCC 10895 / CBS 109.51 / FGSC 9923 / NRRL Y-1056) (Yeast)).